The following is a 418-amino-acid chain: Actin-like protein 7B (418 aa).

Positions 1–42 are disordered; that stretch reads MATKNSPSPKPMGTAQGDPGEAGTLPAPEAAGIRDTGSTQLK. Ser8 carries the post-translational modification Phosphoserine.

This sequence belongs to the actin family. In terms of tissue distribution, testis specific.

The protein resides in the cytoplasm. It is found in the cytoskeleton. The sequence is that of Actin-like protein 7B (Actl7b) from Mus musculus (Mouse).